Here is a 20-residue protein sequence, read N- to C-terminus: Cruzioseptin-15 (20 aa).

Expressed by the skin glands.

The protein resides in the secreted. Its function is as follows. Has antimicrobial activity. In Cruziohyla calcarifer (Splendid leaf frog), this protein is Cruzioseptin-15.